Here is a 197-residue protein sequence, read N- to C-terminus: Adenylyl-sulfate kinase (197 aa).

ATP is bound at residue 31–38 (GLSGAGKS). S105 serves as the catalytic Phosphoserine intermediate.

Belongs to the APS kinase family.

It catalyses the reaction adenosine 5'-phosphosulfate + ATP = 3'-phosphoadenylyl sulfate + ADP + H(+). Its pathway is sulfur metabolism; hydrogen sulfide biosynthesis; sulfite from sulfate: step 2/3. In terms of biological role, catalyzes the synthesis of activated sulfate. The protein is Adenylyl-sulfate kinase of Aeromonas hydrophila subsp. hydrophila (strain ATCC 7966 / DSM 30187 / BCRC 13018 / CCUG 14551 / JCM 1027 / KCTC 2358 / NCIMB 9240 / NCTC 8049).